A 243-amino-acid chain; its full sequence is Large ribosomal subunit protein uL3 (243 aa).

Disordered regions lie at residues 139–164 and 218–243; these read VSHR…KMPG and KPGK…QEGV. At Gln-151 the chain carries N5-methylglutamine. The span at 231-243 shows a compositional bias: low complexity; sequence QTAAAPAAEQEGV.

Belongs to the universal ribosomal protein uL3 family. In terms of assembly, part of the 50S ribosomal subunit. Forms a cluster with proteins L14 and L19. Post-translationally, methylated by PrmB.

In terms of biological role, one of the primary rRNA binding proteins, it binds directly near the 3'-end of the 23S rRNA, where it nucleates assembly of the 50S subunit. The protein is Large ribosomal subunit protein uL3 of Rhodopseudomonas palustris (strain BisB18).